The primary structure comprises 369 residues: Anhydro-N-acetylmuramic acid kinase (369 aa).

12–19 (GTSLDGVD) provides a ligand contact to ATP.

This sequence belongs to the anhydro-N-acetylmuramic acid kinase family.

It catalyses the reaction 1,6-anhydro-N-acetyl-beta-muramate + ATP + H2O = N-acetyl-D-muramate 6-phosphate + ADP + H(+). It participates in amino-sugar metabolism; 1,6-anhydro-N-acetylmuramate degradation. Its pathway is cell wall biogenesis; peptidoglycan recycling. Catalyzes the specific phosphorylation of 1,6-anhydro-N-acetylmuramic acid (anhMurNAc) with the simultaneous cleavage of the 1,6-anhydro ring, generating MurNAc-6-P. Is required for the utilization of anhMurNAc either imported from the medium or derived from its own cell wall murein, and thus plays a role in cell wall recycling. This chain is Anhydro-N-acetylmuramic acid kinase, found in Shigella flexneri serotype 5b (strain 8401).